We begin with the raw amino-acid sequence, 421 residues long: Putative nickel insertion protein (421 aa).

The protein belongs to the LarC family.

In Gloeobacter violaceus (strain ATCC 29082 / PCC 7421), this protein is Putative nickel insertion protein.